Here is a 594-residue protein sequence, read N- to C-terminus: Laccase-2 (594 aa).

The signal sequence occupies residues 1 to 20 (MGGIIKLSFLFCSLISLVNS). A glycan (N-linked (GlcNAc...) asparagine) is linked at Asn-67. Plastocyanin-like domains are found at residues 70 to 183 (EALA…HSPN) and 195 to 357 (DRIV…RYTG). Cu cation contacts are provided by His-117 and His-119. The N-linked (GlcNAc...) asparagine glycan is linked to Asn-124. A disulfide bond links Cys-138 and Cys-578. Residues His-162 and His-164 each coordinate Cu cation. Asn-242, Asn-286, Asn-320, Asn-358, Asn-397, Asn-430, Asn-452, and Asn-458 each carry an N-linked (GlcNAc...) asparagine glycan. The region spanning 466-563 (PVNIIINNLD…KMAVVVVQPE (98 aa)) is the Plastocyanin-like 3 domain. Positions 480, 483, and 485 each coordinate Cu cation. Residue Asn-508 is glycosylated (N-linked (GlcNAc...) asparagine). His-543, Cys-544, His-545, and His-549 together coordinate Cu cation.

Belongs to the multicopper oxidase family. Requires Cu cation as cofactor.

The protein localises to the secreted. It is found in the cell wall. It carries out the reaction 4 hydroquinone + O2 = 4 benzosemiquinone + 2 H2O. Its function is as follows. Laccase that catalyzes the oxidation of certain aromatic compounds, including L-dopa, to quinones, which then polymerize to melanin. Able to oxidize a wide variety of aromatic diphenol and diamino groups in the ortho, meta, and para positions but not monophenolic groups such as in phenol, tyramine, or tyrosine. Plays an important role in virulence. Plays a role in dissemination to extrapulmonary sites but is not involved in pulmonary growth or in elicitation of cellular immune responses in the lung. In Cryptococcus neoformans var. grubii serotype A (strain H99 / ATCC 208821 / CBS 10515 / FGSC 9487) (Filobasidiella neoformans var. grubii), this protein is Laccase-2 (LAC2).